We begin with the raw amino-acid sequence, 1030 residues long: ADAMTS-like protein 4 (1030 aa).

Positions 1–24 (MELWLGRLWLYVMLLLLLLQLCQD) are cleaved as a signal peptide. The region spanning 47–91 (GPWGRWASCSQPCGVGVQRRSRTCELHPALSLPPRPPRHPEAPQP) is the TSP type-1 1 domain. Disordered stretches follow at residues 73–150 (HPAL…KPGM) and 168–306 (LAHK…LPLT). Composition is skewed to polar residues over residues 176 to 186 (KDSSTAEETLP), 211 to 237 (QSRSPSAETPRSGTAQTEVPSRTSSAP), and 245 to 257 (PTSSFRDSRSFQG). Residues Asn451 and Asn731 are each glycosylated (N-linked (GlcNAc...) asparagine). TSP type-1 domains lie at 681–740 (CPPY…QLRL), 741–800 (CGHW…GPCT), 803–865 (WFYS…GPCE), 866–925 (KTWR…QGQA), and 926–982 (CEDQ…QPCN). One can recognise a PLAC domain in the interval 985–1022 (PDDQCKDSSPHCPLVVQARLCVYPYYTATCCRSCAHVL).

As to quaternary structure, interacts with CTSB. Interacts with FBN1. Post-translationally, glycosylated. Can be O-fucosylated by POFUT2 on a serine or a threonine residue found within the consensus sequence C1-X(2)-(S/T)-C2-G of the TSP type-1 repeat domains where C1 and C2 are the first and second cysteine residue of the repeat, respectively. Fucosylated repeats can then be further glycosylated by the addition of a beta-1,3-glucose residue by the glucosyltransferase, B3GALTL. Fucosylation mediates the efficient secretion of ADAMTS family members. Can also be C-glycosylated with one or two mannose molecules on tryptophan residues within the consensus sequence W-X-X-W of the TPRs, and N-glycosylated. These other glycosylations can also facilitate secretion.

It localises to the secreted. The protein resides in the extracellular space. It is found in the extracellular matrix. Functionally, positive regulation of apoptosis. May facilitate FBN1 microfibril biogenesis. This chain is ADAMTS-like protein 4, found in Rattus norvegicus (Rat).